Consider the following 554-residue polypeptide: CTP synthase (554 aa).

The interval 1 to 265 is amidoligase domain; sequence MTPLIFVTGG…DELVIDQFKL (265 aa). Position 13 (Ser-13) interacts with CTP. Position 13 (Ser-13) interacts with UTP. ATP-binding positions include 14-19 and Asp-71; that span reads SLGKGI. Asp-71 and Glu-139 together coordinate Mg(2+). CTP is bound by residues 146 to 148, 186 to 191, and Lys-222; these read DIE and KTKPTQ. UTP contacts are provided by residues 186-191 and Lys-222; that span reads KTKPTQ. The Glutamine amidotransferase type-1 domain occupies 292–545; the sequence is TIAVVGKYVD…VRAAREKKAG (254 aa). Gly-353 is a binding site for L-glutamine. The active-site Nucleophile; for glutamine hydrolysis is the Cys-380. L-glutamine is bound by residues 381–384, Glu-404, and Arg-471; that span reads YGMQ. Residues His-518 and Glu-520 contribute to the active site.

The protein belongs to the CTP synthase family. As to quaternary structure, homotetramer.

It carries out the reaction UTP + L-glutamine + ATP + H2O = CTP + L-glutamate + ADP + phosphate + 2 H(+). The enzyme catalyses L-glutamine + H2O = L-glutamate + NH4(+). It catalyses the reaction UTP + NH4(+) + ATP = CTP + ADP + phosphate + 2 H(+). The protein operates within pyrimidine metabolism; CTP biosynthesis via de novo pathway; CTP from UDP: step 2/2. With respect to regulation, allosterically activated by GTP, when glutamine is the substrate; GTP has no effect on the reaction when ammonia is the substrate. The allosteric effector GTP functions by stabilizing the protein conformation that binds the tetrahedral intermediate(s) formed during glutamine hydrolysis. Inhibited by the product CTP, via allosteric rather than competitive inhibition. Its function is as follows. Catalyzes the ATP-dependent amination of UTP to CTP with either L-glutamine or ammonia as the source of nitrogen. Regulates intracellular CTP levels through interactions with the four ribonucleotide triphosphates. This is CTP synthase from Xanthomonas campestris pv. campestris (strain 8004).